The primary structure comprises 555 residues: Formate--tetrahydrofolate ligase (555 aa).

Residue 65–72 (TPAGEGKT) coordinates ATP.

Belongs to the formate--tetrahydrofolate ligase family.

The catalysed reaction is (6S)-5,6,7,8-tetrahydrofolate + formate + ATP = (6R)-10-formyltetrahydrofolate + ADP + phosphate. The protein operates within one-carbon metabolism; tetrahydrofolate interconversion. This Paracoccus denitrificans (strain Pd 1222) protein is Formate--tetrahydrofolate ligase.